Here is a 257-residue protein sequence, read N- to C-terminus: Glutamate racemase (257 aa).

Substrate is bound by residues 12-13 (DS) and 44-45 (YG). The active-site Proton donor/acceptor is Cys-75. Residue 76–77 (NT) coordinates substrate. Residue Cys-185 is the Proton donor/acceptor of the active site. 186–187 (TH) serves as a coordination point for substrate.

The protein belongs to the aspartate/glutamate racemases family.

The enzyme catalyses L-glutamate = D-glutamate. The protein operates within cell wall biogenesis; peptidoglycan biosynthesis. Provides the (R)-glutamate required for cell wall biosynthesis. The chain is Glutamate racemase from Clostridium botulinum (strain 657 / Type Ba4).